We begin with the raw amino-acid sequence, 509 residues long: Bifunctional purine biosynthesis protein PurH (509 aa).

Residues 1–144 (MKRALISVSD…KNYAAVTVVV (144 aa)) form the MGS-like domain.

This sequence belongs to the PurH family.

It catalyses the reaction (6R)-10-formyltetrahydrofolate + 5-amino-1-(5-phospho-beta-D-ribosyl)imidazole-4-carboxamide = 5-formamido-1-(5-phospho-D-ribosyl)imidazole-4-carboxamide + (6S)-5,6,7,8-tetrahydrofolate. The enzyme catalyses IMP + H2O = 5-formamido-1-(5-phospho-D-ribosyl)imidazole-4-carboxamide. Its pathway is purine metabolism; IMP biosynthesis via de novo pathway; 5-formamido-1-(5-phospho-D-ribosyl)imidazole-4-carboxamide from 5-amino-1-(5-phospho-D-ribosyl)imidazole-4-carboxamide (10-formyl THF route): step 1/1. It participates in purine metabolism; IMP biosynthesis via de novo pathway; IMP from 5-formamido-1-(5-phospho-D-ribosyl)imidazole-4-carboxamide: step 1/1. This is Bifunctional purine biosynthesis protein PurH from Listeria monocytogenes serotype 4b (strain CLIP80459).